We begin with the raw amino-acid sequence, 532 residues long: Glycerophosphocholine permease GIT4 (532 aa).

6 consecutive transmembrane segments (helical) span residues 55 to 75 (LWPA…NAGI), 98 to 118 (NIGS…GYIS), 126 to 146 (GMLT…VASW), 150 to 170 (VQGF…AIGA), 201 to 221 (AMID…LWIF), and 229 to 249 (VWRL…FIRL). N266 is a glycosylation site (N-linked (GlcNAc...) asparagine). The helical transmembrane segment at 272–292 (WWLIIKFYWFRLTVVSLIWFI) threads the bilayer. N-linked (GlcNAc...) asparagine glycosylation is present at N314. Helical transmembrane passes span 321–341 (WGWS…GAFI), 349–369 (LTLA…SACL), and 375–395 (HVAG…FGPG). A glycan (N-linked (GlcNAc...) asparagine) is linked at N396. Helical transmembrane passes span 416–436 (GIAA…FPAI) and 450–470 (VPFY…IFFV).

It belongs to the major facilitator superfamily. Sugar transporter (TC 2.A.1.1) family.

The protein resides in the cell membrane. It catalyses the reaction sn-glycerol 3-phosphocholine(out) = sn-glycerol 3-phosphocholine(in). Glycerophosphodiester transporter that mediates uptake of glycerophosphocholine (GroPCho) with GIT3. Does not possess detectable glycerophosphoinositol (GroPIns) transport activity. The expanded ability to utilize GroPIns and GroPCho results from the organism's pathogenic nature and its need to occupy a variety of environments within its host organism. This possibility is buttressed by the fact that GroPIns and GroPCho are present and abundant in human fluids. This chain is Glycerophosphocholine permease GIT4, found in Candida albicans (strain SC5314 / ATCC MYA-2876) (Yeast).